A 217-amino-acid polypeptide reads, in one-letter code: Thiamine-phosphate synthase (217 aa).

4-amino-2-methyl-5-(diphosphooxymethyl)pyrimidine is bound by residues glutamine 39–lysine 43 and asparagine 71. Positions 72 and 91 each coordinate Mg(2+). Threonine 110 provides a ligand contact to 4-amino-2-methyl-5-(diphosphooxymethyl)pyrimidine. Serine 137–threonine 139 provides a ligand contact to 2-[(2R,5Z)-2-carboxy-4-methylthiazol-5(2H)-ylidene]ethyl phosphate. Lysine 140 is a 4-amino-2-methyl-5-(diphosphooxymethyl)pyrimidine binding site. Glycine 167 is a 2-[(2R,5Z)-2-carboxy-4-methylthiazol-5(2H)-ylidene]ethyl phosphate binding site.

The protein belongs to the thiamine-phosphate synthase family. Requires Mg(2+) as cofactor.

It carries out the reaction 2-[(2R,5Z)-2-carboxy-4-methylthiazol-5(2H)-ylidene]ethyl phosphate + 4-amino-2-methyl-5-(diphosphooxymethyl)pyrimidine + 2 H(+) = thiamine phosphate + CO2 + diphosphate. The catalysed reaction is 2-(2-carboxy-4-methylthiazol-5-yl)ethyl phosphate + 4-amino-2-methyl-5-(diphosphooxymethyl)pyrimidine + 2 H(+) = thiamine phosphate + CO2 + diphosphate. It catalyses the reaction 4-methyl-5-(2-phosphooxyethyl)-thiazole + 4-amino-2-methyl-5-(diphosphooxymethyl)pyrimidine + H(+) = thiamine phosphate + diphosphate. Its pathway is cofactor biosynthesis; thiamine diphosphate biosynthesis; thiamine phosphate from 4-amino-2-methyl-5-diphosphomethylpyrimidine and 4-methyl-5-(2-phosphoethyl)-thiazole: step 1/1. Its function is as follows. Condenses 4-methyl-5-(beta-hydroxyethyl)thiazole monophosphate (THZ-P) and 2-methyl-4-amino-5-hydroxymethyl pyrimidine pyrophosphate (HMP-PP) to form thiamine monophosphate (TMP). The protein is Thiamine-phosphate synthase of Alcanivorax borkumensis (strain ATCC 700651 / DSM 11573 / NCIMB 13689 / SK2).